The chain runs to 343 residues: ATPase GET3 (343 aa).

Position 32–39 (32–39) interacts with ATP; sequence KGGVGKTT. D61 is a catalytic residue. ATP-binding residues include E245 and N272. Residues C283 and C286 each coordinate Zn(2+).

It belongs to the arsA ATPase family. As to quaternary structure, homodimer.

The protein localises to the cytoplasm. The protein resides in the endoplasmic reticulum. Functionally, ATPase required for the post-translational delivery of tail-anchored (TA) proteins to the endoplasmic reticulum. Recognizes and selectively binds the transmembrane domain of TA proteins in the cytosol. This complex then targets to the endoplasmic reticulum by membrane-bound receptors, where the tail-anchored protein is released for insertion. This process is regulated by ATP binding and hydrolysis. ATP binding drives the homodimer towards the closed dimer state, facilitating recognition of newly synthesized TA membrane proteins. ATP hydrolysis is required for insertion. Subsequently, the homodimer reverts towards the open dimer state, lowering its affinity for the membrane-bound receptor, and returning it to the cytosol to initiate a new round of targeting. The chain is ATPase GET3 from Pyricularia oryzae (strain 70-15 / ATCC MYA-4617 / FGSC 8958) (Rice blast fungus).